A 577-amino-acid polypeptide reads, in one-letter code: Arginine--tRNA ligase (577 aa).

Residues 122–132 (PNVAKEMHVGH) carry the 'HIGH' region motif.

It belongs to the class-I aminoacyl-tRNA synthetase family. As to quaternary structure, monomer.

Its subcellular location is the cytoplasm. The enzyme catalyses tRNA(Arg) + L-arginine + ATP = L-arginyl-tRNA(Arg) + AMP + diphosphate. The polypeptide is Arginine--tRNA ligase (Salmonella schwarzengrund (strain CVM19633)).